A 418-amino-acid polypeptide reads, in one-letter code: UDP-N-acetylglucosamine 1-carboxyvinyltransferase (418 aa).

23 to 24 (KN) contributes to the phosphoenolpyruvate binding site. Residue Arg-93 participates in UDP-N-acetyl-alpha-D-glucosamine binding. Asp-117 (proton donor) is an active-site residue. The UDP-N-acetyl-alpha-D-glucosamine site is built by Asp-305 and Ile-327.

It belongs to the EPSP synthase family. MurA subfamily.

It localises to the cytoplasm. The enzyme catalyses phosphoenolpyruvate + UDP-N-acetyl-alpha-D-glucosamine = UDP-N-acetyl-3-O-(1-carboxyvinyl)-alpha-D-glucosamine + phosphate. The protein operates within cell wall biogenesis; peptidoglycan biosynthesis. Its function is as follows. Cell wall formation. Adds enolpyruvyl to UDP-N-acetylglucosamine. The sequence is that of UDP-N-acetylglucosamine 1-carboxyvinyltransferase from Corynebacterium jeikeium (strain K411).